The following is a 788-amino-acid chain: Ribosome biogenesis protein ERB1 (788 aa).

The tract at residues 1 to 91 (MGDLKGSRKR…SKPIREKSKP (91 aa)) is disordered. The span at 38 to 50 (LSDKSHDTEHSSD) shows a compositional bias: basic and acidic residues. The segment covering 51–78 (SEIELVDDLSSDDGEEYEDEFDSDEIPS) has biased composition (acidic residues). The span at 80–91 (IESKPIREKSKP) shows a compositional bias: basic and acidic residues. 6 WD repeats span residues 433-472 (GHSG…QIWS), 476-516 (SDEE…PEME), 613-651 (KGGG…LVKI), 654-699 (PGAR…RPYK), 703-742 (YHQK…DLLS), and 758-788 (TGEL…RLWT).

Belongs to the WD repeat BOP1/ERB1 family. In terms of assembly, component of the NOP7 complex, composed of ERB1, NOP7 and YTM1. The complex is held together by ERB1, which interacts with NOP7 via its N-terminal domain and with YTM1 via a high-affinity interaction between the seven-bladed beta-propeller domains of the 2 proteins. The NOP7 complex associates with the 66S pre-ribosome.

It is found in the nucleus. The protein localises to the nucleolus. Its subcellular location is the nucleoplasm. Functionally, component of the NOP7 complex, which is required for maturation of the 25S and 5.8S ribosomal RNAs and formation of the 60S ribosome. The chain is Ribosome biogenesis protein ERB1 from Ajellomyces capsulatus (strain NAm1 / WU24) (Darling's disease fungus).